Reading from the N-terminus, the 555-residue chain is Dihydroxy-acid dehydratase (555 aa).

Mg(2+) is bound at residue Asp80. Residue Cys121 coordinates [2Fe-2S] cluster. The Mg(2+) site is built by Asp122 and Lys123. An N6-carboxylysine modification is found at Lys123. Position 193 (Cys193) interacts with [2Fe-2S] cluster. Glu444 serves as a coordination point for Mg(2+). Ser470 (proton acceptor) is an active-site residue.

It belongs to the IlvD/Edd family. As to quaternary structure, homodimer. The cofactor is [2Fe-2S] cluster. Requires Mg(2+) as cofactor.

The catalysed reaction is (2R)-2,3-dihydroxy-3-methylbutanoate = 3-methyl-2-oxobutanoate + H2O. It catalyses the reaction (2R,3R)-2,3-dihydroxy-3-methylpentanoate = (S)-3-methyl-2-oxopentanoate + H2O. The protein operates within amino-acid biosynthesis; L-isoleucine biosynthesis; L-isoleucine from 2-oxobutanoate: step 3/4. It functions in the pathway amino-acid biosynthesis; L-valine biosynthesis; L-valine from pyruvate: step 3/4. In terms of biological role, functions in the biosynthesis of branched-chain amino acids. Catalyzes the dehydration of (2R,3R)-2,3-dihydroxy-3-methylpentanoate (2,3-dihydroxy-3-methylvalerate) into 2-oxo-3-methylpentanoate (2-oxo-3-methylvalerate) and of (2R)-2,3-dihydroxy-3-methylbutanoate (2,3-dihydroxyisovalerate) into 2-oxo-3-methylbutanoate (2-oxoisovalerate), the penultimate precursor to L-isoleucine and L-valine, respectively. The sequence is that of Dihydroxy-acid dehydratase from Aquifex aeolicus (strain VF5).